Consider the following 126-residue polypeptide: Aspartate 1-decarboxylase (126 aa).

The active-site Schiff-base intermediate with substrate; via pyruvic acid is the serine 25. Serine 25 carries the pyruvic acid (Ser) modification. Threonine 57 contributes to the substrate binding site. Residue tyrosine 58 is the Proton donor of the active site. Residue 73–75 participates in substrate binding; it reads GGA.

Belongs to the PanD family. In terms of assembly, heterooctamer of four alpha and four beta subunits. The cofactor is pyruvate. Is synthesized initially as an inactive proenzyme, which is activated by self-cleavage at a specific serine bond to produce a beta-subunit with a hydroxyl group at its C-terminus and an alpha-subunit with a pyruvoyl group at its N-terminus.

The protein localises to the cytoplasm. It catalyses the reaction L-aspartate + H(+) = beta-alanine + CO2. The protein operates within cofactor biosynthesis; (R)-pantothenate biosynthesis; beta-alanine from L-aspartate: step 1/1. Its function is as follows. Catalyzes the pyruvoyl-dependent decarboxylation of aspartate to produce beta-alanine. The sequence is that of Aspartate 1-decarboxylase from Xylella fastidiosa (strain 9a5c).